The chain runs to 299 residues: ATP phosphoribosyltransferase (299 aa).

It belongs to the ATP phosphoribosyltransferase family. Long subfamily. The cofactor is Mg(2+).

It localises to the cytoplasm. The enzyme catalyses 1-(5-phospho-beta-D-ribosyl)-ATP + diphosphate = 5-phospho-alpha-D-ribose 1-diphosphate + ATP. It participates in amino-acid biosynthesis; L-histidine biosynthesis; L-histidine from 5-phospho-alpha-D-ribose 1-diphosphate: step 1/9. Its activity is regulated as follows. Feedback inhibited by histidine. In terms of biological role, catalyzes the condensation of ATP and 5-phosphoribose 1-diphosphate to form N'-(5'-phosphoribosyl)-ATP (PR-ATP). Has a crucial role in the pathway because the rate of histidine biosynthesis seems to be controlled primarily by regulation of HisG enzymatic activity. This is ATP phosphoribosyltransferase from Campylobacter lari (strain RM2100 / D67 / ATCC BAA-1060).